A 105-amino-acid chain; its full sequence is Flowering-promoting factor 1-like protein 5 (105 aa).

The protein belongs to the FPF1 family.

In Oryza sativa subsp. japonica (Rice), this protein is Flowering-promoting factor 1-like protein 5.